A 174-amino-acid polypeptide reads, in one-letter code: Co-chaperone protein HscB homolog (174 aa).

One can recognise a J domain in the interval 2–74 (NYFELFNLPV…IRRAEHMLAL (73 aa)).

This sequence belongs to the HscB family. As to quaternary structure, interacts with HscA and stimulates its ATPase activity.

Functionally, co-chaperone involved in the maturation of iron-sulfur cluster-containing proteins. Seems to help targeting proteins to be folded toward HscA. The polypeptide is Co-chaperone protein HscB homolog (Shewanella amazonensis (strain ATCC BAA-1098 / SB2B)).